A 115-amino-acid chain; its full sequence is Large ribosomal subunit protein bL20 (115 aa).

The protein belongs to the bacterial ribosomal protein bL20 family.

Binds directly to 23S ribosomal RNA and is necessary for the in vitro assembly process of the 50S ribosomal subunit. It is not involved in the protein synthesizing functions of that subunit. This Prochlorococcus marinus (strain MIT 9301) protein is Large ribosomal subunit protein bL20.